A 340-amino-acid chain; its full sequence is MAITVYYDKDCDLNLIKSKKVAIIGFGSQGHAHAMNLRDNGVNVTIGLREGSVSAVKAKNAGFEVVSVSEASKIADVIMILAPDEIQADIFNVEIKPNLSEGKAIAFAHGFNIHYGQIVVPKGVDVIMIAPKAPGHTVRNEFTLGGGTPCLIAIHQDESKNAKNLALSYASAIGGGRTGIIETTFKAETETDLFGEQAVLCGGLSALIQAGFETLVEAGYEPEMAYFECLHEMKLIVDLIYQGGIADMRYSISNTAEYGDYITGPKIITEETKKAMKGVLKDIQNGVFAKDFILERRAGFARMHAERKNMNDSLIEKTGRNLRAMMPWISAKKLVDKDKN.

In terms of domain architecture, KARI N-terminal Rossmann spans 1–183; it reads MAITVYYDKD…GGGRTGIIET (183 aa). NADP(+) contacts are provided by residues 26–29, Arg-49, Ser-52, Ser-54, and 84–87; these read FGSQ and DEIQ. His-109 is an active-site residue. Gly-135 contacts NADP(+). The 146-residue stretch at 184-329 folds into the KARI C-terminal knotted domain; the sequence is TFKAETETDL…RNLRAMMPWI (146 aa). Mg(2+)-binding residues include Asp-192, Glu-196, Glu-228, and Glu-232. Ser-253 lines the substrate pocket.

This sequence belongs to the ketol-acid reductoisomerase family. It depends on Mg(2+) as a cofactor.

The enzyme catalyses (2R)-2,3-dihydroxy-3-methylbutanoate + NADP(+) = (2S)-2-acetolactate + NADPH + H(+). It catalyses the reaction (2R,3R)-2,3-dihydroxy-3-methylpentanoate + NADP(+) = (S)-2-ethyl-2-hydroxy-3-oxobutanoate + NADPH + H(+). It participates in amino-acid biosynthesis; L-isoleucine biosynthesis; L-isoleucine from 2-oxobutanoate: step 2/4. The protein operates within amino-acid biosynthesis; L-valine biosynthesis; L-valine from pyruvate: step 2/4. Functionally, involved in the biosynthesis of branched-chain amino acids (BCAA). Catalyzes an alkyl-migration followed by a ketol-acid reduction of (S)-2-acetolactate (S2AL) to yield (R)-2,3-dihydroxy-isovalerate. In the isomerase reaction, S2AL is rearranged via a Mg-dependent methyl migration to produce 3-hydroxy-3-methyl-2-ketobutyrate (HMKB). In the reductase reaction, this 2-ketoacid undergoes a metal-dependent reduction by NADPH to yield (R)-2,3-dihydroxy-isovalerate. The chain is Ketol-acid reductoisomerase (NADP(+)) from Campylobacter jejuni subsp. jejuni serotype O:2 (strain ATCC 700819 / NCTC 11168).